Reading from the N-terminus, the 220-residue chain is Inner membrane-spanning protein YciB (220 aa).

6 helical membrane-spanning segments follow: residues 20 to 40 (EVPP…FFFA), 57 to 77 (IGAP…IALA), 86 to 106 (LPIM…LTLW), 123 to 143 (LFGG…GYVF), 156 to 176 (KLTL…EIVW), and 187 to 207 (FKVW…MPLI).

The protein belongs to the YciB family.

The protein resides in the cell inner membrane. Plays a role in cell envelope biogenesis, maintenance of cell envelope integrity and membrane homeostasis. In Brucella melitensis biotype 2 (strain ATCC 23457), this protein is Inner membrane-spanning protein YciB.